A 57-amino-acid chain; its full sequence is uncharacterized protein (57 aa).

This is an uncharacterized protein from Saccharomyces cerevisiae (strain ATCC 204508 / S288c) (Baker's yeast).